Here is a 762-residue protein sequence, read N- to C-terminus: Probable inorganic carbon transporter subunit DabA (762 aa).

Zn(2+) contacts are provided by C279, D281, H461, and C476.

The protein belongs to the inorganic carbon transporter (TC 9.A.2) DabA family. As to quaternary structure, forms a complex with DabB. The cofactor is Zn(2+).

It localises to the cell inner membrane. Part of an energy-coupled inorganic carbon pump. The chain is Probable inorganic carbon transporter subunit DabA from Legionella pneumophila subsp. pneumophila (strain Philadelphia 1 / ATCC 33152 / DSM 7513).